The primary structure comprises 150 residues: UPF0756 membrane protein ECA1265 (150 aa).

Transmembrane regions (helical) follow at residues 1 to 21 (MAYIDPTLLILLVLAGLGIIS), 51 to 71 (YGLSIGIVVLTIGVMAPIASG), 82 to 102 (FLHWKSLLAILIGVAVSWLGG), and 127 to 147 (ALFRGVPVGPLIAAGLLSLLI).

The protein belongs to the UPF0756 family.

Its subcellular location is the cell membrane. In Pectobacterium atrosepticum (strain SCRI 1043 / ATCC BAA-672) (Erwinia carotovora subsp. atroseptica), this protein is UPF0756 membrane protein ECA1265.